Consider the following 106-residue polypeptide: UPF0449 protein C19orf25 homolog (106 aa).

It belongs to the UPF0449 family.

The protein is UPF0449 protein C19orf25 homolog of Xenopus tropicalis (Western clawed frog).